The following is a 188-amino-acid chain: HTH-type transcriptional regulator LmrA (188 aa).

Residues 4 to 64 form the HTH tetR-type domain; the sequence is GDSREKILSA…IEAVNEMKEY (61 aa). The H-T-H motif DNA-binding region spans 27 to 46; the sequence is GLNQIIKESGAPKGSLYYHF.

In terms of biological role, acts as a repressor of the lincomycin-resistance (lmrAB) and yxaGH operons. In Bacillus subtilis (strain 168), this protein is HTH-type transcriptional regulator LmrA (lmrA).